The sequence spans 663 residues: uncharacterized protein (663 aa).

Residue 207 to 214 (GPPGTGKT) participates in ATP binding.

It belongs to the DNA2/NAM7 helicase family.

This is an uncharacterized protein from Methanocaldococcus jannaschii (strain ATCC 43067 / DSM 2661 / JAL-1 / JCM 10045 / NBRC 100440) (Methanococcus jannaschii).